A 443-amino-acid polypeptide reads, in one-letter code: Xaa-Pro dipeptidase (443 aa).

Residues aspartate 246, aspartate 257, histidine 339, glutamate 384, and glutamate 423 each coordinate Mn(2+).

Belongs to the peptidase M24B family. Bacterial-type prolidase subfamily. Requires Mn(2+) as cofactor.

It carries out the reaction Xaa-L-Pro dipeptide + H2O = an L-alpha-amino acid + L-proline. Functionally, splits dipeptides with a prolyl residue in the C-terminal position. The sequence is that of Xaa-Pro dipeptidase from Escherichia fergusonii (strain ATCC 35469 / DSM 13698 / CCUG 18766 / IAM 14443 / JCM 21226 / LMG 7866 / NBRC 102419 / NCTC 12128 / CDC 0568-73).